The chain runs to 430 residues: Adenylosuccinate synthetase (430 aa).

GTP-binding positions include 12–18 and 40–42; these read GDEGKGK and GHT. D13 acts as the Proton acceptor in catalysis. 2 residues coordinate Mg(2+): D13 and G40. IMP is bound by residues 13 to 16, 38 to 41, T130, R144, Q224, T239, and R303; these read DEGK and NAGH. Catalysis depends on H41, which acts as the Proton donor. Position 299 to 305 (299 to 305) interacts with substrate; the sequence is TVTGRKR. GTP is bound by residues R305, 331-333, and 413-415; these read KLD and STS.

Belongs to the adenylosuccinate synthetase family. Homodimer. Mg(2+) serves as cofactor.

It is found in the cytoplasm. It carries out the reaction IMP + L-aspartate + GTP = N(6)-(1,2-dicarboxyethyl)-AMP + GDP + phosphate + 2 H(+). It participates in purine metabolism; AMP biosynthesis via de novo pathway; AMP from IMP: step 1/2. Its function is as follows. Plays an important role in the de novo pathway of purine nucleotide biosynthesis. Catalyzes the first committed step in the biosynthesis of AMP from IMP. The chain is Adenylosuccinate synthetase from Cereibacter sphaeroides (strain ATCC 17023 / DSM 158 / JCM 6121 / CCUG 31486 / LMG 2827 / NBRC 12203 / NCIMB 8253 / ATH 2.4.1.) (Rhodobacter sphaeroides).